A 944-amino-acid polypeptide reads, in one-letter code: Putative alpha,alpha-trehalose-phosphate synthase [UDP-forming] 106 kDa subunit (944 aa).

Residues 73-84 (TNAQSNIATPSP) show a composition bias toward polar residues. Disordered stretches follow at residues 73–113 (TNAQ…NSLS) and 129–166 (SKND…SELE). Residues 101–113 (PSSDSPSLENSLS) are compositionally biased toward low complexity. 6 positions are modified to phosphoserine: Ser-141, Ser-145, Ser-149, Ser-150, Ser-163, and Ser-177. A glycosyltransferase region spans residues 173-652 (SRSLSFSMNG…AVTFQSLIKE (480 aa)). The residue at position 189 (Thr-189) is a Phosphothreonine.

This sequence in the N-terminal section; belongs to the glycosyltransferase 20 family.

It catalyses the reaction D-glucose 6-phosphate + UDP-alpha-D-glucose = alpha,alpha-trehalose 6-phosphate + UDP + H(+). The polypeptide is Putative alpha,alpha-trehalose-phosphate synthase [UDP-forming] 106 kDa subunit (Schizosaccharomyces pombe (strain 972 / ATCC 24843) (Fission yeast)).